The primary structure comprises 186 residues: MAKQPEEWHYLNPEFDNTPLEEEEEEEIIWVSKSEIKRDAEALKKLGTELVELSAQELERVPLDEKLLASIKLAQKVQREARRRQIQYIGKLLRNVDEEPIRQALDKLKNRHNQQILVLHKLEDLRTRLIDGGNEVIEEVVALYPMADRQQLRTLIRNAKKEKEANKPPKSFRLLFQYLKDLSESA.

Belongs to the DarP family.

The protein localises to the cytoplasm. Its function is as follows. Member of a network of 50S ribosomal subunit biogenesis factors which assembles along the 30S-50S interface, preventing incorrect 23S rRNA structures from forming. Promotes peptidyl transferase center (PTC) maturation. This is Dual-action ribosomal maturation protein DarP from Proteus mirabilis (strain HI4320).